The following is a 302-amino-acid chain: Aspartate carbamoyltransferase catalytic subunit (302 aa).

Carbamoyl phosphate-binding residues include arginine 53 and threonine 54. An L-aspartate-binding site is contributed by lysine 82. Carbamoyl phosphate is bound by residues arginine 103, histidine 131, and glutamine 134. Arginine 164 and arginine 223 together coordinate L-aspartate. Residues leucine 260 and proline 261 each contribute to the carbamoyl phosphate site.

The protein belongs to the aspartate/ornithine carbamoyltransferase superfamily. ATCase family. Heterooligomer of catalytic and regulatory chains.

The enzyme catalyses carbamoyl phosphate + L-aspartate = N-carbamoyl-L-aspartate + phosphate + H(+). It functions in the pathway pyrimidine metabolism; UMP biosynthesis via de novo pathway; (S)-dihydroorotate from bicarbonate: step 2/3. Catalyzes the condensation of carbamoyl phosphate and aspartate to form carbamoyl aspartate and inorganic phosphate, the committed step in the de novo pyrimidine nucleotide biosynthesis pathway. This is Aspartate carbamoyltransferase catalytic subunit from Methanococcus maripaludis (strain C6 / ATCC BAA-1332).